The sequence spans 838 residues: DNA gyrase subunit A (838 aa).

T2 is modified (N-acetylthreonine). The 470-residue stretch at 41–510 folds into the Topo IIA-type catalytic domain; it reads LPEVRDGLKP…ADGDVSDEDL (470 aa). Y129 functions as the O-(5'-phospho-DNA)-tyrosine intermediate in the catalytic mechanism. The Ca(2+) site is built by D504, S506, E508, and D515. Residues 504-516 enclose the EF-hand domain; that stretch reads DVSDEDLIAREDV. The tract at residues 514–838 is C-terminal domain CTD; it reads EDVVVTITET…DANGADQTGN (325 aa). Positions 537–543 match the GyrA-box motif; that stretch reads QKRGGKG. The GyrA-box-1 motif lies at 743-749; sequence QGRGGKG.

This sequence belongs to the type II topoisomerase GyrA/ParC subunit family. Heterotetramer, composed of two GyrA and two GyrB chains. In the heterotetramer, GyrA contains the active site tyrosine that forms a transient covalent intermediate with DNA, while GyrB binds cofactors and catalyzes ATP hydrolysis. Ca(2+) is required as a cofactor.

It localises to the cytoplasm. The enzyme catalyses ATP-dependent breakage, passage and rejoining of double-stranded DNA.. DNA supercoiling inhibited by (fluoro)quinoline antibiotics such as sparfloxacin and levofloxacin, which usually act on GyrA. DNA supercoiling inhibited by the coumarin antibiotic novobiocin which acts on GyrB. Quinolones lead to gyrase-mediated dsDNA cleavage while preventing reclosure. DNA supercoiling activity inhibited by aminopyrazinamide and pyrrolamide derivatives, probably via effects on the GyrB subunit. DNA relaxation inhibited by ATP and its analogs. DNA supercoiling, relaxation, decatenation and quinolone-promoted DNA cleavage are inhibited by MfpA (50% inhibition occurs at 2 uM), inhibition of gyrase activities is enhanced in a concentration-dependent manner by MfpA. Functionally, a type II topoisomerase that negatively supercoils closed circular double-stranded (ds) DNA in an ATP-dependent manner to maintain chromosomes in an underwound state, while in the absence of ATP it relaxes supercoiled dsDNA. Also catalyzes the interconversion of other topological isomers of dsDNA rings, including catenanes. Gyrase from M.tuberculosis has higher decatenation than supercoiling activity compared to E.coli; as M.tuberculosis only has 1 type II topoisomerase, gyrase has to fulfill the decatenation function of topoisomerase IV as well. At comparable concentrations M.tuberculosis gyrase cannot introduce as many negative supercoils into DNA as the E.coli enzyme, and its ATPase activity is lower, perhaps because it does not couple DNA wrapping and ATP binding as well as E.coli. Its function is as follows. Negative supercoiling favors strand separation, and DNA replication, transcription, recombination and repair, all of which involve strand separation. Type II topoisomerases break and join 2 DNA strands simultaneously in an ATP-dependent manner. This chain is DNA gyrase subunit A, found in Mycobacterium tuberculosis (strain ATCC 25618 / H37Rv).